The primary structure comprises 141 residues: Hemoglobin subunit alpha (141 aa).

The 141-residue stretch at 1 to 141 folds into the Globin domain; that stretch reads VLSPADKTNV…VSTVLTSKYR (141 aa). A Phosphoserine modification is found at serine 3. Lysine 7 is modified (N6-succinyllysine). Threonine 8 is subject to Phosphothreonine. N6-succinyllysine is present on lysine 11. Lysine 16 is subject to N6-acetyllysine; alternate. At lysine 16 the chain carries N6-succinyllysine; alternate. Tyrosine 24 is subject to Phosphotyrosine. A Phosphoserine modification is found at serine 35. Lysine 40 carries the post-translational modification N6-succinyllysine. Serine 49 carries the phosphoserine modification. Histidine 58 contacts O2. A heme b-binding site is contributed by histidine 87. At serine 102 the chain carries Phosphoserine. Threonine 108 bears the Phosphothreonine mark. Serine 124 is subject to Phosphoserine. Residues threonine 134 and threonine 137 each carry the phosphothreonine modification. Residue serine 138 is modified to Phosphoserine.

Belongs to the globin family. In terms of assembly, heterotetramer of two alpha chains and two beta chains. Red blood cells.

In terms of biological role, involved in oxygen transport from the lung to the various peripheral tissues. Hemopressin acts as an antagonist peptide of the cannabinoid receptor CNR1. Hemopressin-binding efficiently blocks cannabinoid receptor CNR1 and subsequent signaling. The protein is Hemoglobin subunit alpha (HBA) of Odobenus rosmarus divergens (Pacific walrus).